A 326-amino-acid polypeptide reads, in one-letter code: Glycine N(alpha)-acyltransferase (326 aa).

The protein belongs to the acetyltransferase family.

It catalyses the reaction a (3R)-hydroxyacyl-[ACP] + glycine = a lyso-glycine lipid + holo-[ACP] + H(+). The enzyme catalyses (3R)-hydroxyhexadecanoyl-[ACP] + glycine = N-[(3R)-3-hydroxyhexadecanoyl]-glycine + holo-[ACP] + H(+). It functions in the pathway lipid metabolism. Functionally, is involved in the production of glycine lipids (GL), which are phosphorus-free membrane lipids. Catalyzes the first step of GL biosynthesis, i.e. the N-acylation of glycine via addition of a 3-hydroxy fatty acyl group, to form a range of monoacylated glycine (also named lyso-glycine lipids or lyso-GL). As an example, catalyzes the production of commendamide, an N-acylated (3-OH C16:0) derivative of glycine with hemolytic activity and the ability to solubilize cholesterol micelles; this compound can also activate NF-kB through the G-protein coupled receptor GPCR G2A/132. This is Glycine N(alpha)-acyltransferase from Phocaeicola vulgatus (strain ATCC 8482 / DSM 1447 / JCM 5826 / CCUG 4940 / NBRC 14291 / NCTC 11154) (Bacteroides vulgatus).